A 514-amino-acid polypeptide reads, in one-letter code: Peptide chain release factor 3 (514 aa).

The region spanning 8–268 is the tr-type G domain; the sequence is KKRRTFAIIS…SFLAFAPEPH (261 aa). GTP is bound by residues 17–24, 85–89, and 139–142; these read SHPDAGKT, DTPGH, and NKLD.

This sequence belongs to the TRAFAC class translation factor GTPase superfamily. Classic translation factor GTPase family. PrfC subfamily.

The protein localises to the cytoplasm. Functionally, increases the formation of ribosomal termination complexes and stimulates activities of RF-1 and RF-2. It binds guanine nucleotides and has strong preference for UGA stop codons. It may interact directly with the ribosome. The stimulation of RF-1 and RF-2 is significantly reduced by GTP and GDP, but not by GMP. The protein is Peptide chain release factor 3 of Streptococcus mutans serotype c (strain ATCC 700610 / UA159).